The sequence spans 137 residues: Large ribosomal subunit protein uL16 (137 aa).

Residues 1–19 are compositionally biased toward basic residues; sequence MLSPKKVKFRKQQRGRRTG. The segment at 1–20 is disordered; the sequence is MLSPKKVKFRKQQRGRRTGT.

Belongs to the universal ribosomal protein uL16 family. Part of the 50S ribosomal subunit.

Binds 23S rRNA and is also seen to make contacts with the A and possibly P site tRNAs. This Desulfosudis oleivorans (strain DSM 6200 / JCM 39069 / Hxd3) (Desulfococcus oleovorans) protein is Large ribosomal subunit protein uL16.